The following is a 482-amino-acid chain: Magnesium-dependent glutamate N-prenyltransferase (482 aa).

Mg(2+) contacts are provided by Asn351, Thr355, Glu359, and Phe366.

It belongs to the terpene synthase family. Requires Mg(2+) as cofactor.

The catalysed reaction is (2E)-geranyl diphosphate + L-glutamate = N-geranyl-L-glutamate + diphosphate. It participates in secondary metabolite biosynthesis. Magnesium-dependent glutamate N-prenyltransferase: part of the gene cluster that mediates the biosynthesis of domoic acid (DA) and derivatives, natural products with neurochemical activity acting as ionotropic glutamate receptor (iGluR) agonists, thus being neurotoxins causing amnesic shellfish poisoning (ASP). Catalyzes the conversion of L-glutamic acid (L-Glu) to N-geranyl-L-glutamic acid (NGG) in the presence of geranyl diphosphate (GPP). Also able to catalyze the formation of farnesyl-L-glutamate from farnesyl diphosphate (FPP). Cannot use dimethylallyl diphosphate (DMAPP) as substrate. In Pseudo-nitzschia multiseries (Marine planktonic diatom), this protein is Magnesium-dependent glutamate N-prenyltransferase.